We begin with the raw amino-acid sequence, 203 residues long: Ribosomal RNA small subunit methyltransferase G (203 aa).

S-adenosyl-L-methionine contacts are provided by residues G75, L80, 126–127 (VE), and R141.

Belongs to the methyltransferase superfamily. RNA methyltransferase RsmG family.

It is found in the cytoplasm. The catalysed reaction is guanosine(527) in 16S rRNA + S-adenosyl-L-methionine = N(7)-methylguanosine(527) in 16S rRNA + S-adenosyl-L-homocysteine. Its function is as follows. Specifically methylates the N7 position of guanine in position 527 of 16S rRNA. The chain is Ribosomal RNA small subunit methyltransferase G from Ruthia magnifica subsp. Calyptogena magnifica.